We begin with the raw amino-acid sequence, 437 residues long: GTPase Obg (437 aa).

The 159-residue stretch at 2–160 folds into the Obg domain; the sequence is SMFLDTAKIS…RQLELELKIL (159 aa). In terms of domain architecture, OBG-type G spans 161–338; the sequence is ADVGLVGFPS…LLEATAELLA (178 aa). Residues 167–174, 192–196, 214–217, 284–287, and 319–321 each bind GTP; these read GFPSVGKS, FTTIV, DLPG, NKMD, and SSL. The Mg(2+) site is built by serine 174 and threonine 194. The OCT domain maps to 359–437; the sequence is GFAKTEKDFE…IGKFEFEFVD (79 aa).

Belongs to the TRAFAC class OBG-HflX-like GTPase superfamily. OBG GTPase family. As to quaternary structure, monomer. The cofactor is Mg(2+).

It is found in the cytoplasm. Functionally, an essential GTPase which binds GTP, GDP and possibly (p)ppGpp with moderate affinity, with high nucleotide exchange rates and a fairly low GTP hydrolysis rate. Plays a role in control of the cell cycle, stress response, ribosome biogenesis and in those bacteria that undergo differentiation, in morphogenesis control. The polypeptide is GTPase Obg (Streptococcus pyogenes serotype M2 (strain MGAS10270)).